The sequence spans 699 residues: Chitin synthase 7 (699 aa).

The next 6 membrane-spanning stretches (helical) occupy residues 19 to 39 (IVGV…AAFL), 58 to 80 (SVVV…VVTL), 98 to 118 (LQWF…LFCI), 445 to 465 (FMQN…LAII), 474 to 494 (LPVG…IYFG), and 507 to 527 (VMFV…IFTA). The tract at residues 628 to 648 (AAGGSGEASEPGTRWAPDPRE) is disordered.

This sequence belongs to the chitin synthase family. Class VI subfamily.

It localises to the cell membrane. It carries out the reaction [(1-&gt;4)-N-acetyl-beta-D-glucosaminyl](n) + UDP-N-acetyl-alpha-D-glucosamine = [(1-&gt;4)-N-acetyl-beta-D-glucosaminyl](n+1) + UDP + H(+). In terms of biological role, polymerizes chitin, a structural polymer of the cell wall and septum, by transferring the sugar moiety of UDP-GlcNAc to the non-reducing end of the growing chitin polymer. Plays a role in cell wall integrity. Required to successfully penetrate the host plants and thus plays a key role in pathogenicity. The sequence is that of Chitin synthase 7 from Verticillium dahliae (strain VdLs.17 / ATCC MYA-4575 / FGSC 10137) (Verticillium wilt).